The chain runs to 618 residues: DnaJ homolog subfamily C member 2 (618 aa).

A J domain is found at 85 to 158; it reads DHYAVLGLAH…VKRRAFDSVD (74 aa). Disordered regions lie at residues 281-315, 330-349, and 419-448; these read KEEEKARKESEKKAKVEAKKREQEEKERARQQQEE, QAAQQAKKEKEAQKKAIKKE, and LQKEKDAELQAQQAARGSEHSSAAGGQNNR. A compositionally biased stretch (polar residues) spans 428–448; it reads QAQQAARGSEHSSAAGGQNNR. 2 consecutive SANT domains span residues 445-507 and 548-603; these read QNNR…KLDP and SNAA…EMIK.

In terms of assembly, component of ribosome-associated complex (RAC).

The protein resides in the nucleus. Its subcellular location is the cytoplasm. It is found in the cytosol. Its function is as follows. Acts both as a chaperone in the cytosol and as a chromatin regulator in the nucleus. When cytosolic, acts as a molecular chaperone: component of the ribosome-associated complex (RAC), a complex involved in folding or maintaining nascent polypeptides in a folding-competent state. When nuclear, mediates the switching from polycomb-repressed genes to an active state: specifically recruited at histone H2A ubiquitinated at 'Lys-119' (H2AK119ub), and promotes the displacement of the polycomb PRC1 complex from chromatin, thereby facilitating transcription activation. This is DnaJ homolog subfamily C member 2 (dnajc2) from Danio rerio (Zebrafish).